The sequence spans 46 residues: Large ribosomal subunit protein bL36B (46 aa).

It belongs to the bacterial ribosomal protein bL36 family.

The polypeptide is Large ribosomal subunit protein bL36B (Enterobacter sp. (strain 638)).